Consider the following 130-residue polypeptide: Hypocretin neuropeptide precursor (130 aa).

Positions 1 to 32 (MNPPSTKVPWAAVTLLLLLLLPPALLSPGAAA) are cleaved as a signal peptide. Gln33 carries the pyrrolidone carboxylic acid modification. 2 disulfides stabilise this stretch: Cys38–Cys44 and Cys39–Cys46. Leu65 bears the Leucine amide mark. Position 96 is a methionine amide (Met96). The propeptide at 97–130 (GRRAGAEPAPRPCPGRRCPVVAVPSAAPGGRSGV) is removed in mature form.

This sequence belongs to the orexin family. Post-translationally, specific enzymatic cleavages at paired basic residues yield the different active peptides.

The protein localises to the rough endoplasmic reticulum. It is found in the cytoplasmic vesicle. It localises to the synapse. Its function is as follows. Neuropeptides that play a significant role in the regulation of food intake and sleep-wakefulness, possibly by coordinating the complex behavioral and physiologic responses of these complementary homeostatic functions. A broader role in the homeostatic regulation of energy metabolism, autonomic function, hormonal balance and the regulation of body fluids, is also suggested. In terms of biological role, binds to orexin receptors HCRTR1/OX1R and HCRTR2/OX2R with a high affinity. Stimulates food intake. Modulates pituitary luteinizing hormone secretion in an ovarian steroid-dependent manner. Binds to orexin receptor HCRTR2/OX2R only. Stimulates food intake. Modulates pituitary luteinizing hormone secretion in an ovarian steroid-dependent manner. The sequence is that of Hypocretin neuropeptide precursor (HCRT) from Canis lupus familiaris (Dog).